The following is a 141-amino-acid chain: Nucleoside diphosphate kinase (141 aa).

Residues K11, F59, R87, T93, R104, and N114 each coordinate ATP.

It belongs to the NDK family. As to quaternary structure, homotetramer. Mg(2+) is required as a cofactor.

It is found in the cytoplasm. It catalyses the reaction a 2'-deoxyribonucleoside 5'-diphosphate + ATP = a 2'-deoxyribonucleoside 5'-triphosphate + ADP. The catalysed reaction is a ribonucleoside 5'-diphosphate + ATP = a ribonucleoside 5'-triphosphate + ADP. In terms of biological role, major role in the synthesis of nucleoside triphosphates other than ATP. The ATP gamma phosphate is transferred to the NDP beta phosphate via a ping-pong mechanism, using a phosphorylated active-site intermediate. The protein is Nucleoside diphosphate kinase of Saccharophagus degradans (strain 2-40 / ATCC 43961 / DSM 17024).